The following is a 278-amino-acid chain: Energy-coupling factor transporter ATP-binding protein EcfA1 (278 aa).

The ABC transporter domain maps to isoleucine 5–aspartate 239. ATP is bound at residue glycine 39 to serine 46. Glutamate 165 serves as the catalytic Proton acceptor.

The protein belongs to the ABC transporter superfamily. Energy-coupling factor EcfA family. As to quaternary structure, forms a stable energy-coupling factor (ECF) transporter complex probably composed of 2 membrane-embedded substrate-binding proteins (S component), 2 ATP-binding proteins (A component) and 2 transmembrane proteins (T component). This complex interacts with a number of substrate-specific components, including FolT and ThiT for 5-formyltetrahydrofolate and thiamine respectively.

The protein resides in the cell membrane. ATP-binding (A) component of a common energy-coupling factor (ECF) ABC-transporter complex. Unlike classic ABC transporters this ECF transporter provides the energy necessary to transport a number of different substrates including 5-formyltetrahydrofolate and thiamine. Expression of the complex plus FolT or ThiT in Lactococcus lactis subsp. cremoris (strain NZ9000) allows 5-formyltetrahydrofolate or thiamine uptake respectively; 5-formyltetrahydrofolate or thiamine are not taken up in the absence of FolT/ThiT or the EcfA1A2T complex. Deenergized L.lactis subsp. cremoris (treated with 2-deoxyglucose) does not take up substrate. This is Energy-coupling factor transporter ATP-binding protein EcfA1 from Lacticaseibacillus paracasei (strain ATCC 334 / BCRC 17002 / CCUG 31169 / CIP 107868 / KCTC 3260 / NRRL B-441) (Lactobacillus paracasei).